The chain runs to 358 residues: Aminodeoxyfutalosine deaminase (358 aa).

Residues histidine 32 and histidine 34 each contribute to the Zn(2+) site. Arginine 87, aspartate 154, and glycine 188 together coordinate substrate. Histidine 215 contributes to the Zn(2+) binding site. Residue glutamate 218 is the Proton donor of the active site. Aspartate 296 provides a ligand contact to Zn(2+).

It belongs to the metallo-dependent hydrolases superfamily. Adenosine and AMP deaminases family. The cofactor is Zn(2+).

It carries out the reaction 6-amino-6-deoxyfutalosine + H2O + H(+) = futalosine + NH4(+). Its pathway is quinol/quinone metabolism; menaquinone biosynthesis. Catalyzes the deamination of aminodeoxyfutalosine (AFL) into futalosine (FL), a step in the biosynthesis of menaquinone (MK, vitamin K2). To a lesser extent, can also deaminate adenosine, 5'-methylthioadenosine, 5'-deoxyadenosine, and 2'-deoxyadenosine. The chain is Aminodeoxyfutalosine deaminase (add2) from Streptomyces avermitilis (strain ATCC 31267 / DSM 46492 / JCM 5070 / NBRC 14893 / NCIMB 12804 / NRRL 8165 / MA-4680).